Reading from the N-terminus, the 711-residue chain is MLNPIVRKFQYGQHTVTLETGMMARQATAAVMVSMDDTAVFVTVVGQKKAKPGQDFFPLTVNYQERTYAAGKIPGGFFRREGRPSEGETLIARLIDRPVRPLFPEGFVNEVQVIATVVSVNPQVNPDIVAMIGASAALSLSGIPFNGPIGAARVGYINDQYVLNPTQEELKSSKLDLVVAGTEAAVLMVESEAELLSEDQMLGAVVFGHEQQQIVIQNINDLVKEAGKPRWDWQPEAVNEALNARVAALAESRLSDAYRITDKQERYAQVDVIKSETIATLVAEDETLDANELGEILHAIEKNVVRSRVLAGEPRIDGREKDMIRGLDVRTGVLPRTHGSALFTRGETQALVTATLGTARDAQNIDELMGERTDSFLFHYNFPPYSVGETGMVGSPKRREIGHGRLAKRGVLAVMPTIDEFPYTVRVVSEITESNGSSSMASVCGASLALMDAGVPVKAAVAGIAMGLVKEGDNFVVLSDILGDEDHLGDMDFKVAGSRDGISALQMDIKIEGITKEIMQVALNQAKGARLHILGVMEQAINAPRGDISEFAPRIHTIKINPDKIKDVIGKGGSVIRALTEETGTTIEIEDDGTVKIAATDGDKAQHAIRRIEEITAEIEVGRIYNGKVTRIVDFGAFVAIGGGKEGLVHISQIADKRVEKVTDYLQMGQEVPVKVLEVDRQGRVRLSIKEATEQTPSAAAPEAPVAEQGE.

Mg(2+)-binding residues include aspartate 486 and aspartate 492. Positions 553-612 (PRIHTIKINPDKIKDVIGKGGSVIRALTEETGTTIEIEDDGTVKIAATDGDKAQHAIRRI) constitute a KH domain. Positions 622-690 (GRIYNGKVTR…RQGRVRLSIK (69 aa)) constitute an S1 motif domain. Residues 691–711 (EATEQTPSAAAPEAPVAEQGE) are disordered. The segment covering 699-711 (AAAPEAPVAEQGE) has biased composition (low complexity).

This sequence belongs to the polyribonucleotide nucleotidyltransferase family. In terms of assembly, component of the RNA degradosome, which is a multiprotein complex involved in RNA processing and mRNA degradation. Mg(2+) is required as a cofactor.

Its subcellular location is the cytoplasm. The enzyme catalyses RNA(n+1) + phosphate = RNA(n) + a ribonucleoside 5'-diphosphate. Functionally, involved in mRNA degradation. Catalyzes the phosphorolysis of single-stranded polyribonucleotides processively in the 3'- to 5'-direction. This is Polyribonucleotide nucleotidyltransferase from Klebsiella pneumoniae (strain 342).